Here is a 385-residue protein sequence, read N- to C-terminus: Heptahelical transmembrane protein 4 (385 aa).

Residues methionine 1–lysine 12 are compositionally biased toward basic and acidic residues. Residues methionine 1 to lysine 22 form a disordered region. Topologically, residues methionine 1–threonine 79 are cytoplasmic. Residues leucine 80–alanine 100 form a helical membrane-spanning segment. Over threonine 101 to proline 191 the chain is Extracellular. Residues phenylalanine 192–leucine 212 traverse the membrane as a helical segment. At serine 213 to tyrosine 228 the chain is on the cytoplasmic side. The chain crosses the membrane as a helical span at residues alanine 229–cysteine 249. Topologically, residues aspartate 250–leucine 256 are extracellular. A helical transmembrane segment spans residues tyrosine 257 to phenylalanine 277. The Cytoplasmic portion of the chain corresponds to glutamine 278–serine 288. The chain crosses the membrane as a helical span at residues leucine 289–tryptophan 309. Residues aspartate 310 to glutamate 313 lie on the Extracellular side of the membrane. A helical transmembrane segment spans residues alanine 314–valine 334. At tyrosine 335 to glutamine 356 the chain is on the cytoplasmic side. Residues leucine 357–leucine 377 traverse the membrane as a helical segment.

The protein belongs to the ADIPOR family. In terms of tissue distribution, expressed in roots, leaves, stems and flowers.

The protein localises to the membrane. May play a role in abiotic stress response. The sequence is that of Heptahelical transmembrane protein 4 (HHP4) from Arabidopsis thaliana (Mouse-ear cress).